The primary structure comprises 436 residues: GTPase Obg (436 aa).

An Obg domain is found at 2–160 (SMFLDTAKIQ…RELLLELKVL (159 aa)). The OBG-type G domain occupies 161 to 338 (ADVGLVGFPS…LLDATAELLD (178 aa)). GTP contacts are provided by residues 167 to 174 (GFPSVGKS), 192 to 196 (FTTIV), 214 to 217 (DLPG), 284 to 287 (NKMD), and 319 to 321 (SSL). Mg(2+) is bound by residues Ser-174 and Thr-194. Residues 358–436 (GFDEEAPAFE…IGKFEFEFVD (79 aa)) form the OCT domain.

The protein belongs to the TRAFAC class OBG-HflX-like GTPase superfamily. OBG GTPase family. Monomer. Requires Mg(2+) as cofactor.

It localises to the cytoplasm. Its function is as follows. An essential GTPase which binds GTP, GDP and possibly (p)ppGpp with moderate affinity, with high nucleotide exchange rates and a fairly low GTP hydrolysis rate. Plays a role in control of the cell cycle, stress response, ribosome biogenesis and in those bacteria that undergo differentiation, in morphogenesis control. This chain is GTPase Obg, found in Streptococcus sanguinis (strain SK36).